We begin with the raw amino-acid sequence, 441 residues long: ATP-dependent protease ATPase subunit HslU (441 aa).

ATP is bound by residues I18, 60–65, D254, E319, and R391; that span reads GVGKTE.

This sequence belongs to the ClpX chaperone family. HslU subfamily. In terms of assembly, a double ring-shaped homohexamer of HslV is capped on each side by a ring-shaped HslU homohexamer. The assembly of the HslU/HslV complex is dependent on binding of ATP.

The protein localises to the cytoplasm. ATPase subunit of a proteasome-like degradation complex; this subunit has chaperone activity. The binding of ATP and its subsequent hydrolysis by HslU are essential for unfolding of protein substrates subsequently hydrolyzed by HslV. HslU recognizes the N-terminal part of its protein substrates and unfolds these before they are guided to HslV for hydrolysis. This chain is ATP-dependent protease ATPase subunit HslU, found in Shewanella piezotolerans (strain WP3 / JCM 13877).